The chain runs to 1792 residues: Protein TIC 214 (1792 aa).

Transmembrane regions (helical) follow at residues Ile-18–Gly-38, Phe-64–Leu-84, Pro-87–His-107, Ile-129–Leu-149, Ile-165–Ile-185, and Ile-221–Phe-241.

This sequence belongs to the TIC214 family. Part of the Tic complex.

The protein localises to the plastid. It localises to the chloroplast inner membrane. In terms of biological role, involved in protein precursor import into chloroplasts. May be part of an intermediate translocation complex acting as a protein-conducting channel at the inner envelope. This is Protein TIC 214 from Glycine max (Soybean).